A 951-amino-acid chain; its full sequence is Pentatricopeptide repeat-containing protein At4g19220, mitochondrial (951 aa).

The N-terminal 63 residues, 1–63 (MLLVMVRSST…RHFTSSVLSP (63 aa)), are a transit peptide targeting the mitochondrion. PPR repeat units lie at residues 121–151 (DLATSSKLLTFYGRTGELVSSSCLFDELKEK), 152–186 (DVIVWNSMITALNQNGRYIAAVGLFIEMIHKGNEF), 187–221 (DSTTLLLAASALSSLHLSRKCSMLHCLAIETGLVG), 222–252 (DSSLCNALMNLYAKGENLSSAECVFTHMEHR), 253–287 (DIVSWNTIMTKCLANGHPRKSLQYFKSMTGSGQEA), 288–322 (DTVTFSCVISACSSIEELTLGESLHGLVIKSGYSP), 325–355 (HVSVGNSIISMYSKCGDTEAAETVFEELVCR), 356–386 (DVISSNAILNGFAANGMFEEAFGILNQMQSV), 392–426 (DIATVVSITSICGDLSFSREGRAVHGYTVRMEMQS), 428–458 (ALEVINSVIDMYGKCGLTTQAELLFKTTTHR), 459–489 (DLVSWNSMISAFSQNGFTHKAKNLFKEVVSE), 496–530 (SLSTVLAILTSCDSSDSLIFGKSVHCWLQKLGFGD), 531–561 (NMLSANSVINMYIGCRDLTSAFLRLETMSET), 563–597 (DLTSWNSVISGCASSGHHLESLRAFQAMSREGKIR), 599–629 (DLITLLGTISASGNLGLVLQGRCFHGLAIKS), 634–668 (DTQLQNTLITMYGRCKDIESAVKVFGLISDPNLCS), 669–695 (WNCVISALSQNKAGREVFQLFRNLKLE), 697–731 (NEITFVGLLSASTQLGSTSYGMQAHCHLIRRGFQA), 732–762 (NPFVSAALVDMYSSCGMLETGMKVFRNSGVN), 763–793 (SISAWNSVISAHGFHGMGEKAMELFKELSSN), 799–829 (NKSSFISLLSACSHSGFIDEGLSYYKQMEEK), and 835–865 (VTEHRVWIVDMLGRAGKLREAYEFITGIGEP). The type E motif stretch occupies residues 870 to 945 (VWGALLSACN…LPGYSVIDVR (76 aa)).

This sequence belongs to the PPR family. PCMP-E subfamily.

Its subcellular location is the mitochondrion. The polypeptide is Pentatricopeptide repeat-containing protein At4g19220, mitochondrial (PCMP-E2) (Arabidopsis thaliana (Mouse-ear cress)).